The following is a 368-amino-acid chain: HECT-type ubiquitin ligase-interacting protein apyA (368 aa).

The protein belongs to the arrestin family. As to quaternary structure, interacts with hulA.

Functionally, may be involved in signaling by recognizing appropriately phosphorylated substrates via its arrestin domains and then recruit a HECT-type ubiquitin ligase such as hulA, leading to ubiquitination of the substrate, providing a link between ubiquitination and phosphorylation in protein regulation and stability. This chain is HECT-type ubiquitin ligase-interacting protein apyA (apyA), found in Emericella nidulans (strain FGSC A4 / ATCC 38163 / CBS 112.46 / NRRL 194 / M139) (Aspergillus nidulans).